The chain runs to 271 residues: Energy-coupling factor transporter ATP-binding protein EcfA (271 aa).

The 230-residue stretch at Ile2 to Thr231 folds into the ABC transporter domain. Residue Gly34–Ser41 participates in ATP binding.

The protein belongs to the ABC transporter superfamily. Energy-coupling factor EcfA family. Forms a stable energy-coupling factor (ECF) transporter complex composed of 2 membrane-embedded substrate-binding proteins (S component), 2 ATP-binding proteins (A component) and 2 transmembrane proteins (T component).

Its subcellular location is the cell membrane. ATP-binding (A) component of a common energy-coupling factor (ECF) ABC-transporter complex. Unlike classic ABC transporters this ECF transporter provides the energy necessary to transport a number of different substrates. This Aster yellows witches'-broom phytoplasma (strain AYWB) protein is Energy-coupling factor transporter ATP-binding protein EcfA.